We begin with the raw amino-acid sequence, 1111 residues long: uncharacterized protein (1111 aa).

The signal sequence occupies residues 1-31 (MIRKLMKIPPFFTALFASAMFTLSVSQGVLA). Helical transmembrane passes span 490–510 (LPYL…IFKF), 538–558 (LALL…LAVC), 572–592 (FWHW…WISL), 620–640 (IIVV…TDAG), 644–664 (DVLG…IIAP), 694–714 (IPVG…LNLI), 797–817 (FIWT…VTVV), 840–860 (SITL…YVLV), 885–905 (ITTL…FATL), 922–942 (GLGF…ILLF), and 1003–1023 (LVIS…QLLL).

This sequence belongs to the MscS (TC 1.A.23) family.

It is found in the cell membrane. This is an uncharacterized protein from Haemophilus influenzae (strain ATCC 51907 / DSM 11121 / KW20 / Rd).